Reading from the N-terminus, the 265-residue chain is Cytochrome c oxidase subunit 3 (265 aa).

The next 7 helical transmembrane spans lie at 16–36 (PWPI…VMYM), 41–61 (GGAT…FVWW), 81–101 (GPRY…FAFF), 137–157 (TPIL…ILAG), 162–182 (AVYA…FQGM), 200–220 (FFLA…FLII), and 245–265 (WHFV…WGGI).

It belongs to the cytochrome c oxidase subunit 3 family. As to quaternary structure, component of the cytochrome c oxidase (complex IV, CIV), a multisubunit enzyme composed of a catalytic core of 3 subunits and several supernumerary subunits. The complex exists as a monomer or a dimer and forms supercomplexes (SCs) in the inner mitochondrial membrane with ubiquinol-cytochrome c oxidoreductase (cytochrome b-c1 complex, complex III, CIII).

The protein localises to the mitochondrion inner membrane. The catalysed reaction is 4 Fe(II)-[cytochrome c] + O2 + 8 H(+)(in) = 4 Fe(III)-[cytochrome c] + 2 H2O + 4 H(+)(out). Functionally, component of the cytochrome c oxidase, the last enzyme in the mitochondrial electron transport chain which drives oxidative phosphorylation. The respiratory chain contains 3 multisubunit complexes succinate dehydrogenase (complex II, CII), ubiquinol-cytochrome c oxidoreductase (cytochrome b-c1 complex, complex III, CIII) and cytochrome c oxidase (complex IV, CIV), that cooperate to transfer electrons derived from NADH and succinate to molecular oxygen, creating an electrochemical gradient over the inner membrane that drives transmembrane transport and the ATP synthase. Cytochrome c oxidase is the component of the respiratory chain that catalyzes the reduction of oxygen to water. Electrons originating from reduced cytochrome c in the intermembrane space (IMS) are transferred via the dinuclear copper A center (CU(A)) of subunit 2 and heme A of subunit 1 to the active site in subunit 1, a binuclear center (BNC) formed by heme A3 and copper B (CU(B)). The BNC reduces molecular oxygen to 2 water molecules using 4 electrons from cytochrome c in the IMS and 4 protons from the mitochondrial matrix. This is Cytochrome c oxidase subunit 3 (COX3) from Vicia faba (Broad bean).